Reading from the N-terminus, the 435-residue chain is Cyclin-dependent kinase 15 (435 aa).

The region spanning 103-387 is the Protein kinase domain; sequence YLNLEKLGEG…AQEALVHDYF (285 aa). Residues 109 to 117 and Lys-132 each bind ATP; that span reads LGEGSYATV. The Proton acceptor role is filled by Asp-224.

It belongs to the protein kinase superfamily. CMGC Ser/Thr protein kinase family. CDC2/CDKX subfamily. It depends on Mg(2+) as a cofactor.

It carries out the reaction L-seryl-[protein] + ATP = O-phospho-L-seryl-[protein] + ADP + H(+). The enzyme catalyses L-threonyl-[protein] + ATP = O-phospho-L-threonyl-[protein] + ADP + H(+). Functionally, serine/threonine-protein kinase that acts like an antiapoptotic protein that counters TRAIL/TNFSF10-induced apoptosis by inducing phosphorylation of BIRC5 at 'Thr-34'. The polypeptide is Cyclin-dependent kinase 15 (CDK15) (Homo sapiens (Human)).